A 252-amino-acid chain; its full sequence is Imidazole glycerol phosphate synthase subunit HisF (252 aa).

Active-site residues include aspartate 11 and aspartate 130.

This sequence belongs to the HisA/HisF family. Heterodimer of HisH and HisF.

The protein localises to the cytoplasm. The catalysed reaction is 5-[(5-phospho-1-deoxy-D-ribulos-1-ylimino)methylamino]-1-(5-phospho-beta-D-ribosyl)imidazole-4-carboxamide + L-glutamine = D-erythro-1-(imidazol-4-yl)glycerol 3-phosphate + 5-amino-1-(5-phospho-beta-D-ribosyl)imidazole-4-carboxamide + L-glutamate + H(+). Its pathway is amino-acid biosynthesis; L-histidine biosynthesis; L-histidine from 5-phospho-alpha-D-ribose 1-diphosphate: step 5/9. IGPS catalyzes the conversion of PRFAR and glutamine to IGP, AICAR and glutamate. The HisF subunit catalyzes the cyclization activity that produces IGP and AICAR from PRFAR using the ammonia provided by the HisH subunit. The chain is Imidazole glycerol phosphate synthase subunit HisF from Dictyoglomus thermophilum (strain ATCC 35947 / DSM 3960 / H-6-12).